Consider the following 60-residue polypeptide: Hemocyte defensin Cg-Defh1 (60 aa).

A signal peptide spans 1–17 (LFTLVVLLMVSADMAFA). Residues Phe-19, Gly-20, and Cys-21 each contribute to the beta-D-GlcNAc-(1-&gt;4)-Mur2Ac(oyl-L-Ala-gamma-D-Glu-L-Lys-D-Ala-D-Ala)-di-trans,octa-cis-undecaprenyl diphosphate site. Disulfide bonds link Cys-21–Cys-42, Cys-28–Cys-51, Cys-32–Cys-53, and Cys-37–Cys-56. The tract at residues 22-25 (PRDQ) is binds to membrane interface. Residue His-31 coordinates beta-D-GlcNAc-(1-&gt;4)-Mur2Ac(oyl-L-Ala-gamma-D-Glu-L-Lys-D-Ala-D-Ala)-di-trans,octa-cis-undecaprenyl diphosphate. Positions 43–49 (DAVTLWL) are binds to membrane interface. Cys-51 serves as a coordination point for beta-D-GlcNAc-(1-&gt;4)-Mur2Ac(oyl-L-Ala-gamma-D-Glu-L-Lys-D-Ala-D-Ala)-di-trans,octa-cis-undecaprenyl diphosphate.

Belongs to the invertebrate defensin family. Expressed in hemocytes.

It is found in the secreted. Its subcellular location is the target cell membrane. Functionally, antibacterial peptide mostly active against Gram-positive bacteria. It acts by selectively inhibiting peptidoglycan biosynthesis through complex formation with the cell wall precursor lipid II (1:1 molar ratio) thus inhibiting cell wall synthesis. It does not disrupt cell membranes. Is noticeably less potent than Cg-Defh2 and Cg-Defm. Shows no or limited activities against Gram-negative bacteria. The chain is Hemocyte defensin Cg-Defh1 from Magallana gigas (Pacific oyster).